The following is a 149-amino-acid chain: MHCPFCAAVDTKVIDSRLVGDGSQVRRRRQCLVCNERFTTFEVAELVMPRVIKSDEVREPFNEDKLRRGMLKALEKRPVSSDDVENAINHIKSQLRATGEREVPTKLVGNLVMDALKKLDKVAYIRFASVYRSFEDIREFGEEIARLQD.

The segment at 3-34 (CPFCAAVDTKVIDSRLVGDGSQVRRRRQCLVC) is a zinc-finger region. The ATP-cone domain occupies 49–139 (PRVIKSDEVR…VYRSFEDIRE (91 aa)).

Belongs to the NrdR family. Zn(2+) serves as cofactor.

Negatively regulates transcription of bacterial ribonucleotide reductase nrd genes and operons by binding to NrdR-boxes. The chain is Transcriptional repressor NrdR from Serratia proteamaculans (strain 568).